We begin with the raw amino-acid sequence, 506 residues long: Acetaldehyde dehydrogenase 2 (506 aa).

240–245 (GETTTG) contributes to the NAD(+) binding site. Residues glutamate 262 and cysteine 301 contribute to the active site.

It belongs to the aldehyde dehydrogenase family.

It carries out the reaction an aldehyde + NAD(+) + H2O = a carboxylate + NADH + 2 H(+). Its pathway is alcohol metabolism; ethanol degradation; acetate from ethanol: step 2/2. The protein operates within ketone degradation; acetoin degradation. Its function is as follows. Involved in the catabolism of acetoin and ethanol. The protein is Acetaldehyde dehydrogenase 2 (acoD) of Cupriavidus necator (strain ATCC 17699 / DSM 428 / KCTC 22496 / NCIMB 10442 / H16 / Stanier 337) (Ralstonia eutropha).